A 589-amino-acid chain; its full sequence is Peroxisomal biogenesis factor 8 (589 aa).

The Microbody targeting signal signature appears at 587–589 (SKL).

Its subcellular location is the peroxisome matrix. Its function is as follows. Required for peroxisome assembly. This is Peroxisomal biogenesis factor 8 (PEX8) from Saccharomyces cerevisiae (strain ATCC 204508 / S288c) (Baker's yeast).